Here is a 176-residue protein sequence, read N- to C-terminus: Sperm-egg fusion protein TMEM95 (176 aa).

The signal sequence occupies residues M1–A16. Disulfide bonds link C17–C118, C20–C121, C105–C128, and C109–C134. Over C17 to K145 the chain is Extracellular. The chain crosses the membrane as a helical span at residues I146–E166. At S167 to L176 the chain is on the cytoplasmic side.

Belongs to the TMEM95 family. Does not interact with sperm-egg fusion proteins IZUMO1 or IZUMO1R/JUNO. In terms of processing, N-glycosylated. Spermatozoa (at protein level).

The protein resides in the cytoplasmic vesicle. It is found in the secretory vesicle. Its subcellular location is the acrosome membrane. In terms of biological role, sperm protein required for fusion of sperm with the egg membrane during fertilization. This is Sperm-egg fusion protein TMEM95 from Homo sapiens (Human).